We begin with the raw amino-acid sequence, 313 residues long: HPr kinase/phosphorylase (313 aa).

Active-site residues include His140 and Lys161. An ATP-binding site is contributed by 155-162; sequence GDSGVGKS. Mg(2+) is bound at residue Ser162. The active-site Proton acceptor; for phosphorylation activity. Proton donor; for dephosphorylation activity is the Asp179. An important for the catalytic mechanism of both phosphorylation and dephosphorylation region spans residues 203 to 212; sequence LEIRGIGIID. Position 204 (Glu204) interacts with Mg(2+). Residue Arg245 is part of the active site. The important for the catalytic mechanism of dephosphorylation stretch occupies residues 266-271; sequence PVKVGR.

Belongs to the HPrK/P family. Homohexamer. The cofactor is Mg(2+).

The enzyme catalyses [HPr protein]-L-serine + ATP = [HPr protein]-O-phospho-L-serine + ADP + H(+). It catalyses the reaction [HPr protein]-O-phospho-L-serine + phosphate + H(+) = [HPr protein]-L-serine + diphosphate. Functionally, catalyzes the ATP- as well as the pyrophosphate-dependent phosphorylation of a specific serine residue in HPr, a phosphocarrier protein of the phosphoenolpyruvate-dependent sugar phosphotransferase system (PTS). HprK/P also catalyzes the pyrophosphate-producing, inorganic phosphate-dependent dephosphorylation (phosphorolysis) of seryl-phosphorylated HPr (P-Ser-HPr). The two antagonistic activities of HprK/P are regulated by several intracellular metabolites, which change their concentration in response to the absence or presence of rapidly metabolisable carbon sources (glucose, fructose, etc.) in the growth medium. Therefore, by controlling the phosphorylation state of HPr, HPrK/P is a sensor enzyme that plays a major role in the regulation of carbon metabolism and sugar transport: it mediates carbon catabolite repression (CCR), and regulates PTS-catalyzed carbohydrate uptake and inducer exclusion. This is HPr kinase/phosphorylase from Latilactobacillus sakei subsp. sakei (strain 23K) (Lactobacillus sakei subsp. sakei).